The sequence spans 248 residues: DNA repair protein RecO (248 aa).

It belongs to the RecO family.

In terms of biological role, involved in DNA repair and RecF pathway recombination. The sequence is that of DNA repair protein RecO from Bacillus cytotoxicus (strain DSM 22905 / CIP 110041 / 391-98 / NVH 391-98).